Consider the following 670-residue polypeptide: Penicillin-binding protein activator LpoA (670 aa).

The signal sequence occupies residues M1–G26. C27 is lipidated: N-palmitoyl cysteine. Residue C27 is the site of S-diacylglycerol cysteine attachment.

The protein belongs to the LpoA family. In terms of assembly, interacts with PBP1a.

It localises to the cell outer membrane. Regulator of peptidoglycan synthesis that is essential for the function of penicillin-binding protein 1A (PBP1a). This Erwinia tasmaniensis (strain DSM 17950 / CFBP 7177 / CIP 109463 / NCPPB 4357 / Et1/99) protein is Penicillin-binding protein activator LpoA.